The sequence spans 479 residues: Sulfate adenylyltransferase subunit 1 (479 aa).

Residues 25–239 (KSLLRFLTCG…EVLETVDIQR (215 aa)) enclose the tr-type G domain. The tract at residues 34–41 (GSVDDGKS) is G1. 34–41 (GSVDDGKS) contributes to the GTP binding site. Residues 92–96 (GITID) are G2. Residues 113-116 (DTPG) are G3. GTP is bound by residues 113-117 (DTPGH) and 168-171 (NKMD). The tract at residues 168 to 171 (NKMD) is G4. Residues 206–208 (SAL) are G5.

The protein belongs to the TRAFAC class translation factor GTPase superfamily. Classic translation factor GTPase family. CysN/NodQ subfamily. Heterodimer composed of CysD, the smaller subunit, and CysN.

The catalysed reaction is sulfate + ATP + H(+) = adenosine 5'-phosphosulfate + diphosphate. The protein operates within sulfur metabolism; hydrogen sulfide biosynthesis; sulfite from sulfate: step 1/3. Its function is as follows. With CysD forms the ATP sulfurylase (ATPS) that catalyzes the adenylation of sulfate producing adenosine 5'-phosphosulfate (APS) and diphosphate, the first enzymatic step in sulfur assimilation pathway. APS synthesis involves the formation of a high-energy phosphoric-sulfuric acid anhydride bond driven by GTP hydrolysis by CysN coupled to ATP hydrolysis by CysD. In Salmonella paratyphi A (strain ATCC 9150 / SARB42), this protein is Sulfate adenylyltransferase subunit 1.